The primary structure comprises 637 residues: Sodium-dependent nutrient amino acid transporter 1 (637 aa).

A compositionally biased stretch (polar residues) spans 1–17 (MELKTMPQNGANAGTQH). Residues 1 to 39 (MELKTMPQNGANAGTQHNNNSNNKPDNNEKEAQKKEPER) form a disordered region. Residues 1-47 (MELKTMPQNGANAGTQHNNNSNNKPDNNEKEAQKKEPERTNWSNGLE) lie on the Cytoplasmic side of the membrane. A compositionally biased stretch (basic and acidic residues) spans 26-39 (DNNEKEAQKKEPER). The next 3 helical transmembrane spans lie at 48 to 68 (FLMSCISVSVGLGNVWRFPFT), 75 to 95 (GAFLIPYIIVLFLIGKPMYYL), and 128 to 148 (TICIITYYSSLLALTVYYLFV). Residues asparagine 181 and asparagine 195 are each glycosylated (N-linked (GlcNAc...) asparagine). A run of 9 helical transmembrane segments spans residues 225 to 245 (PDWKLTIALFVSWVVIFLVIM), 254 to 274 (AAYFLALFPYVVLFALLGRAV), 303 to 323 (AVVQCFFSLAVGCGPIIMFAS), 337 to 357 (IVTTLDTLTSLLGGITIFAIL), 397 to 417 (LFSALFFFMLFVLGIGSIVAL), 443 to 463 (ICGFLMGLVYVTPGGQWILTL), 470 to 490 (TYVVFILAIFELAGIVWIYGL), 515 to 535 (FFTPIMMIVIFIYSMVTISPI), and 549 to 569 (AGWVLFAVGAAQFPLWGWWYI).

The protein belongs to the sodium:neurotransmitter symporter (SNF) (TC 2.A.22) family.

Its subcellular location is the membrane. Unusual broad substrate spectrum amino acid:sodium cotransporter that promotes absorption of the D isomers of essential amino acids. Neutral amino acids are the preferred substrates, especially methionine and phenylalanine. The protein is Sodium-dependent nutrient amino acid transporter 1 of Drosophila virilis (Fruit fly).